A 334-amino-acid chain; its full sequence is Aspartate carbamoyltransferase catalytic subunit (334 aa).

Residues R71 and T72 each coordinate carbamoyl phosphate. K99 is an L-aspartate binding site. The carbamoyl phosphate site is built by R121, H151, and Q154. Positions 184 and 239 each coordinate L-aspartate. Residues G280 and P281 each coordinate carbamoyl phosphate.

This sequence belongs to the aspartate/ornithine carbamoyltransferase superfamily. ATCase family. As to quaternary structure, heterododecamer (2C3:3R2) of six catalytic PyrB chains organized as two trimers (C3), and six regulatory PyrI chains organized as three dimers (R2).

The enzyme catalyses carbamoyl phosphate + L-aspartate = N-carbamoyl-L-aspartate + phosphate + H(+). It participates in pyrimidine metabolism; UMP biosynthesis via de novo pathway; (S)-dihydroorotate from bicarbonate: step 2/3. Functionally, catalyzes the condensation of carbamoyl phosphate and aspartate to form carbamoyl aspartate and inorganic phosphate, the committed step in the de novo pyrimidine nucleotide biosynthesis pathway. This is Aspartate carbamoyltransferase catalytic subunit from Pseudomonas entomophila (strain L48).